Reading from the N-terminus, the 155-residue chain is Ribosomal RNA large subunit methyltransferase H (155 aa).

S-adenosyl-L-methionine contacts are provided by residues Gly-104 and 123 to 128 (LSRLTL).

Belongs to the RNA methyltransferase RlmH family. Homodimer.

The protein localises to the cytoplasm. It carries out the reaction pseudouridine(1915) in 23S rRNA + S-adenosyl-L-methionine = N(3)-methylpseudouridine(1915) in 23S rRNA + S-adenosyl-L-homocysteine + H(+). In terms of biological role, specifically methylates the pseudouridine at position 1915 (m3Psi1915) in 23S rRNA. The polypeptide is Ribosomal RNA large subunit methyltransferase H (Marinomonas sp. (strain MWYL1)).